We begin with the raw amino-acid sequence, 118 residues long: Large ribosomal subunit protein bL20 (118 aa).

The protein belongs to the bacterial ribosomal protein bL20 family.

Functionally, binds directly to 23S ribosomal RNA and is necessary for the in vitro assembly process of the 50S ribosomal subunit. It is not involved in the protein synthesizing functions of that subunit. In Alteromonas mediterranea (strain DSM 17117 / CIP 110805 / LMG 28347 / Deep ecotype), this protein is Large ribosomal subunit protein bL20.